The following is a 1094-amino-acid chain: Centrosomal protein of 128 kDa (1094 aa).

A disordered region spans residues Met-1–Thr-29. Positions Glu-7–Leu-17 are enriched in basic and acidic residues. Position 31 is a phosphoserine (Ser-31). The interval Asp-115–Ile-140 is disordered. Coiled-coil stretches lie at residues Ser-190 to Ile-827 and Glu-879 to Glu-959. Ser-249, Ser-291, and Ser-331 each carry phosphoserine. A disordered region spans residues Ala-319–Gly-345. The segment covering His-328–Asp-342 has biased composition (polar residues). Over residues Asp-987–Tyr-999 the composition is skewed to basic and acidic residues. The interval Asp-987 to Tyr-1018 is disordered. Positions Ser-1000–Leu-1009 are enriched in basic residues. Ser-1061 carries the post-translational modification Phosphoserine. Positions Val-1067 to Ser-1094 are disordered.

The protein resides in the cytoplasm. The protein localises to the cytoskeleton. Its subcellular location is the microtubule organizing center. It localises to the centrosome. It is found in the centriole. The protein resides in the spindle pole. In Homo sapiens (Human), this protein is Centrosomal protein of 128 kDa (CEP128).